The sequence spans 314 residues: MKPLIIIVGPTAVGKTALGVALAQALQGEIISGDSVQVYRKLDIGSAKPTLAEQGNIPHYLLDALEPAEPFTVAQFQTLANQAIQDIQSRGKVPIVVGGTGLYIRSLIDPFQFAEHGSESIRSFWTAFLSEQGKEALHQELAKRDPLSAQRLHPNDTVRIIRALEMCQLTGKPFSETRGNQDLNYPPLPPSTLYVGLTAPREIIYERINRRCEQMVAAGLIEETHNLIKEGYSPKLKPLQSIGYRHALLYLYGKVTLPEMMRIFQRDTRHFAKRQLTWFRRDPRVVWYDTYSGNLTNILESLIGTCSGMESRVE.

G9–T16 is an ATP binding site. A substrate-binding site is contributed by T11–T16. The interval D34–Q37 is interaction with substrate tRNA.

It belongs to the IPP transferase family. In terms of assembly, monomer. It depends on Mg(2+) as a cofactor.

It catalyses the reaction adenosine(37) in tRNA + dimethylallyl diphosphate = N(6)-dimethylallyladenosine(37) in tRNA + diphosphate. Functionally, catalyzes the transfer of a dimethylallyl group onto the adenine at position 37 in tRNAs that read codons beginning with uridine, leading to the formation of N6-(dimethylallyl)adenosine (i(6)A). The protein is tRNA dimethylallyltransferase of Desulfitobacterium hafniense (strain Y51).